The primary structure comprises 96 residues: SPbeta prophage-derived uncharacterized protein YosV (96 aa).

This chain is SPbeta prophage-derived uncharacterized protein YosV (yosV), found in Bacillus subtilis (strain 168).